The sequence spans 156 residues: Small ribosomal subunit protein uS7 (156 aa).

This sequence belongs to the universal ribosomal protein uS7 family. Part of the 30S ribosomal subunit. Contacts proteins S9 and S11.

Functionally, one of the primary rRNA binding proteins, it binds directly to 16S rRNA where it nucleates assembly of the head domain of the 30S subunit. Is located at the subunit interface close to the decoding center, probably blocks exit of the E-site tRNA. This chain is Small ribosomal subunit protein uS7, found in Prochlorococcus marinus (strain MIT 9301).